The primary structure comprises 362 residues: Homoisocitrate dehydrogenase (362 aa).

NADH is bound at residue 79-81 (VQS). Ser81 is a (2R,3S)-homoisocitrate binding site. A phosphoserine mark is found at Ser81 and Ser91. (2R,3S)-homoisocitrate-binding residues include Arg97, Arg107, Arg126, Tyr133, Lys196, and Asn198. Asn198 lines the NADH pocket. The Mg(2+) site is built by Asp232, Asp256, and Asp260. NADH contacts are provided by residues 289-293 (GSAPD) and Asn301.

It belongs to the isocitrate and isopropylmalate dehydrogenases family. Mg(2+) serves as cofactor.

It is found in the cytoplasm. It catalyses the reaction (2R,3S)-homoisocitrate + NAD(+) = 2-oxoadipate + CO2 + NADH. Its pathway is amino-acid biosynthesis; L-lysine biosynthesis via AAA pathway; L-alpha-aminoadipate from 2-oxoglutarate: step 4/5. In Schizosaccharomyces pombe (strain 972 / ATCC 24843) (Fission yeast), this protein is Homoisocitrate dehydrogenase (lys12).